A 72-amino-acid polypeptide reads, in one-letter code: Large ribosomal subunit protein bL31 (72 aa).

4 residues coordinate Zn(2+): C16, C18, C38, and C41.

This sequence belongs to the bacterial ribosomal protein bL31 family. Type A subfamily. In terms of assembly, part of the 50S ribosomal subunit. The cofactor is Zn(2+).

In terms of biological role, binds the 23S rRNA. The sequence is that of Large ribosomal subunit protein bL31 from Azoarcus sp. (strain BH72).